Reading from the N-terminus, the 291-residue chain is Nucleotide-binding protein lmo2474 (291 aa).

Gly13 to Thr20 is an ATP binding site. GTP is bound at residue Asp63–Gly66.

Belongs to the RapZ-like family.

Displays ATPase and GTPase activities. The chain is Nucleotide-binding protein lmo2474 from Listeria monocytogenes serovar 1/2a (strain ATCC BAA-679 / EGD-e).